Consider the following 324-residue polypeptide: IDS-like terpene synthase 1 (324 aa).

The Mg(2+) site is built by D77 and D81.

The protein belongs to the FPP/GGPP synthase family. Mg(2+) serves as cofactor.

It catalyses the reaction (2E)-geranyl diphosphate = (E)-beta-ocimene + diphosphate. It carries out the reaction (2E)-geranyl diphosphate + H2O = linalool + diphosphate. The catalysed reaction is (2E,6E)-farnesyl diphosphate = (3E,6E)-alpha-farnesene + diphosphate. The enzyme catalyses (2E,6E,10E)-geranylgeranyl diphosphate = (E,E,E)-alpha-springene + diphosphate. In terms of biological role, terpene synthase that shows monoterpene synthase activity and produces (E)-beta-ocimene as a major product and linalool as a minor product, using geranyl diphosphate (GPP) as substrate. Also shows sesquiterpene synthase activity as it is able to convert farnesyl diphosphate (FPP) into (E,E)-alpha-farnesene. Finally, TPS1 can convert geranylgeranyl diphosphate into (E,E,E)-alpha-springene. The chain is IDS-like terpene synthase 1 from Melampsora larici-populina (strain 98AG31 / pathotype 3-4-7) (Poplar leaf rust fungus).